The chain runs to 585 residues: Neopullulanase 2 (585 aa).

Ca(2+) contacts are provided by Asn143, Asp145, Asn148, Asp149, Gly169, and Asp171. The substrate site is built by His244 and Arg323. The Nucleophile role is filled by Asp325. Glu354 serves as the catalytic Proton donor. Residues His420–Asp421, Asp465, and Arg469 contribute to the substrate site.

This sequence belongs to the glycosyl hydrolase 13 family. In terms of assembly, monomer. The cofactor is Ca(2+).

The catalysed reaction is Hydrolysis of pullulan to panose (6-alpha-D-glucosylmaltose).. Hydrolyzes pullulan efficiently but only a small amount of starch. Endohydrolysis of 1,4-alpha-glucosidic linkages in pullulan to form panose. Also cleaves (1-6)-alpha-glucosidic linkages to form maltotriose. The protein is Neopullulanase 2 (tvaII) of Thermoactinomyces vulgaris.